The chain runs to 145 residues: Protein SprT-like (145 aa).

Positions 4-140 constitute a SprT-like domain; that stretch reads TNYVQEVSLA…VCGNCHGKLI (137 aa). Position 64 (histidine 64) interacts with Zn(2+). Glutamate 65 is a catalytic residue. Histidine 68 lines the Zn(2+) pocket.

Belongs to the SprT family. Zn(2+) is required as a cofactor.

The protein resides in the cytoplasm. The chain is Protein SprT-like from Streptococcus pyogenes serotype M18 (strain MGAS8232).